The following is a 181-amino-acid chain: Photosystem I assembly protein Ycf4 (181 aa).

2 helical membrane-spanning segments follow: residues 19 to 39 (YFWASLLLVGGLMFLLAGISS) and 61 to 81 (IVMMFYGTLSFGLSIYIMATL).

It belongs to the Ycf4 family.

It is found in the plastid. The protein localises to the chloroplast thylakoid membrane. Seems to be required for the assembly of the photosystem I complex. In Thalassiosira pseudonana (Marine diatom), this protein is Photosystem I assembly protein Ycf4.